We begin with the raw amino-acid sequence, 414 residues long: Glyceraldehyde-3-phosphate dehydrogenase, chloroplastic (414 aa).

Residues 1 to 76 (MAFVAPVATV…GIVAATFGPT (76 aa)) constitute a chloroplast transit peptide. Residues 88-89 (RI), D112, and R156 each bind NADP(+). D-glyceraldehyde 3-phosphate-binding positions include 230-232 (SCT), T261, R276, 289-290 (TG), and R312. The Nucleophile role is filled by C231. Residue N394 coordinates NADP(+).

The protein belongs to the glyceraldehyde-3-phosphate dehydrogenase family. In terms of assembly, homotetramer.

It is found in the plastid. The protein localises to the chloroplast. It catalyses the reaction D-glyceraldehyde 3-phosphate + phosphate + NADP(+) = (2R)-3-phospho-glyceroyl phosphate + NADPH + H(+). It participates in carbohydrate biosynthesis; Calvin cycle. This chain is Glyceraldehyde-3-phosphate dehydrogenase, chloroplastic (GAPA), found in Chondrus crispus (Carrageen Irish moss).